A 196-amino-acid polypeptide reads, in one-letter code: Holliday junction resolvase RecU (196 aa).

Thr82, Asp84, Glu97, and Gln116 together coordinate Mg(2+).

Belongs to the RecU family. The cofactor is Mg(2+).

It is found in the cytoplasm. The catalysed reaction is Endonucleolytic cleavage at a junction such as a reciprocal single-stranded crossover between two homologous DNA duplexes (Holliday junction).. Functionally, endonuclease that resolves Holliday junction intermediates in genetic recombination. Cleaves mobile four-strand junctions by introducing symmetrical nicks in paired strands. Promotes annealing of linear ssDNA with homologous dsDNA. Required for DNA repair, homologous recombination and chromosome segregation. The polypeptide is Holliday junction resolvase RecU (Oceanobacillus iheyensis (strain DSM 14371 / CIP 107618 / JCM 11309 / KCTC 3954 / HTE831)).